The sequence spans 772 residues: Potassium transporter 24 (772 aa).

Over 1–23 (MDVEGGGAAARRKGGWWWWREEA) the chain is Cytoplasmic. A helical membrane pass occupies residues 24 to 44 (VLAYQSLGVVYGEVAAAPLYV). Residues 45–66 (YRSAFAGGDIEHSAGNEEIYGA) lie on the Extracellular side of the membrane. The chain crosses the membrane as a helical span at residues 67–87 (LSLVFWTLTLVPLAKYVLLVL). The Cytoplasmic portion of the chain corresponds to 88 to 150 (RADDAGEGGT…ALERHRVLQR (63 aa)). The helical transmembrane segment at 151–171 (LLLLLALLGTCMVIGDGVLTP) threads the bilayer. Residues 172–192 (AVSVFSAVSGLELSMDKDQHK) lie on the Extracellular side of the membrane. A helical membrane pass occupies residues 193-213 (YILLPITCVILVCLFALQHYG). At 214–216 (THR) the chain is on the cytoplasmic side. Residues 217 to 237 (VGFLFAPIVCLWLLCISIIGV) form a helical membrane-spanning segment. Over 238 to 265 (YNIIHWNPHVYQALSPYYMYKFLRKTQT) the chain is Extracellular. Residues 266–286 (GGWMSLGGILLCVTGSEAMYA) traverse the membrane as a helical segment. The Cytoplasmic segment spans residues 287–298 (DLGHFTQNSIKM). A helical transmembrane segment spans residues 299–319 (AFTLLVYPALVLAYMGQAAYI). The Extracellular segment spans residues 320–344 (SRHHNFEDGSHIGFYVSVPEKIRWP). A helical membrane pass occupies residues 345–365 (VLGIAILASVVGSQAIITGTF). Residues 366-392 (SIIKQCSSLNCFPRVKIVHTSSTVHGQ) are Cytoplasmic-facing. Residues 393-413 (IYIPEINWILMILCLSVTIGF) form a helical membrane-spanning segment. The Extracellular segment spans residues 414–423 (RDTKHLTNAQ). The chain crosses the membrane as a helical span at residues 424 to 444 (GLAVITVMLVTTCLMSLVILL). Topologically, residues 445 to 449 (CWNKS) are cytoplasmic. The helical transmembrane segment at 450-470 (IVYALSFLLFFGAIEVIYFAA) threads the bilayer. At 471–477 (SLVKFHE) the chain is on the extracellular side. The helical transmembrane segment at 478–498 (GAWVPVTLSFIFMMVMCVWHY) threads the bilayer. The Cytoplasmic portion of the chain corresponds to 499–772 (GTKKKYEFDV…TVEVGMICLV (274 aa)). A disordered region spans residues 656 to 684 (EEGEFDGSDSTGSSAHKEINPNTTAPKPK).

The protein belongs to the HAK/KUP transporter (TC 2.A.72.3) family.

Its subcellular location is the membrane. Its function is as follows. High-affinity potassium transporter. This is Potassium transporter 24 (HAK24) from Oryza sativa subsp. japonica (Rice).